We begin with the raw amino-acid sequence, 414 residues long: Probable acetyl-CoA acetyltransferase (414 aa).

The active-site Acyl-thioester intermediate is Cys-110. Residues Tyr-205, 244–246 (KVL), and Lys-249 each bind CoA. K(+) is bound at residue Tyr-205. Residues Ala-266 and Ala-268 each coordinate K(+). Ser-269 contacts CoA. Residue Val-366 coordinates K(+). Active-site proton acceptor residues include His-370 and Cys-400.

This sequence belongs to the thiolase-like superfamily. Thiolase family.

It catalyses the reaction 2 acetyl-CoA = acetoacetyl-CoA + CoA. This chain is Probable acetyl-CoA acetyltransferase, found in Dictyostelium discoideum (Social amoeba).